Consider the following 249-residue polypeptide: MAEDAPVVQQTMLEPEVLLKKRKVNERTRKERVEQAIAKKEAQKKNRKETFKRAETFINNYRQRERERIRLNRSAKNKGDIFVPDETKLLFVIRIAGVKNMPPKIRKVLRLLRLSRINNAVFVRNNKAVAQMLRIVEPYVMYGIPNLHSVRELIYKRGFGKINGQRIALSDNALIEEALGKYDVISIEDIIHEIYNVGSHFKEVTKFLWPFTLTPVKHSLMEKKVKHFNEGRKAGYCGEEINELIKKQV.

The protein belongs to the universal ribosomal protein uL30 family. Component of the small ribosomal subunit (SSU). Mature yeast ribosomes consist of a small (40S) and a large (60S) subunit. The 40S small subunit contains 1 molecule of ribosomal RNA (18S rRNA) and at least 33 different proteins. The large 60S subunit contains 3 rRNA molecules (25S, 5.8S and 5S rRNA) and at least 46 different proteins.

It is found in the cytoplasm. The protein localises to the nucleus. Its subcellular location is the nucleolus. In terms of biological role, component of the ribosome, a large ribonucleoprotein complex responsible for the synthesis of proteins in the cell. The small ribosomal subunit (SSU) binds messenger RNAs (mRNAs) and translates the encoded message by selecting cognate aminoacyl-transfer RNA (tRNA) molecules. The large subunit (LSU) contains the ribosomal catalytic site termed the peptidyl transferase center (PTC), which catalyzes the formation of peptide bonds, thereby polymerizing the amino acids delivered by tRNAs into a polypeptide chain. The nascent polypeptides leave the ribosome through a tunnel in the LSU and interact with protein factors that function in enzymatic processing, targeting, and the membrane insertion of nascent chains at the exit of the ribosomal tunnel. This is Large ribosomal subunit protein uL30A (rlp7) from Schizosaccharomyces pombe (strain 972 / ATCC 24843) (Fission yeast).